We begin with the raw amino-acid sequence, 475 residues long: Pyruvate kinase (475 aa).

Residue arginine 36 coordinates substrate. The K(+) site is built by asparagine 38, serine 40, and aspartate 70. ATP is bound at residue 38–41; the sequence is NFSH. 2 residues coordinate ATP: arginine 77 and lysine 158. Glutamate 223 contacts Mg(2+). Substrate is bound by residues glycine 246, aspartate 247, and threonine 279. Aspartate 247 lines the Mg(2+) pocket.

It belongs to the pyruvate kinase family. Homotetramer. Requires a divalent metal cation as cofactor.

The catalysed reaction is pyruvate + ATP = phosphoenolpyruvate + ADP + H(+). It functions in the pathway carbohydrate degradation; glycolysis; pyruvate from D-glyceraldehyde 3-phosphate: step 5/5. This is Pyruvate kinase (pki) from Thermococcus litoralis (strain ATCC 51850 / DSM 5473 / JCM 8560 / NS-C).